A 63-amino-acid polypeptide reads, in one-letter code: Large ribosomal subunit protein bL32 (63 aa).

Residues 1–20 form a disordered region; it reads MANPKAKMSKSRRDKRRAQF. Residues 7 to 18 are compositionally biased toward basic residues; it reads KMSKSRRDKRRA.

This sequence belongs to the bacterial ribosomal protein bL32 family.

This chain is Large ribosomal subunit protein bL32, found in Chlorobaculum tepidum (strain ATCC 49652 / DSM 12025 / NBRC 103806 / TLS) (Chlorobium tepidum).